Reading from the N-terminus, the 352-residue chain is Isoflavone-7-O-methyltransferase 8 (352 aa).

Position 118 to 127 (118 to 127 (VLDPTLSGSY)) interacts with substrate. S-adenosyl-L-methionine is bound by residues glycine 196, aspartate 219, aspartate 239, methionine 240, and lysine 253. Histidine 257 (proton acceptor) is an active-site residue.

The protein belongs to the class I-like SAM-binding methyltransferase superfamily. Cation-independent O-methyltransferase family. COMT subfamily. In terms of assembly, homodimer.

It carries out the reaction a 7-hydroxyisoflavone + S-adenosyl-L-methionine = a 7-methoxyisoflavone + S-adenosyl-L-homocysteine + H(+). It participates in phytoalexin biosynthesis; medicarpin biosynthesis. Functionally, transfers a methyl group to 7-hydroxyls of the isoflavones daidzein, genistein and 6,7,4'-trihydroxyisoflavone. Can also methylate (+)6a-hydroxymaackiain with lower efficiency. The protein is Isoflavone-7-O-methyltransferase 8 of Medicago sativa (Alfalfa).